The sequence spans 142 residues: Type II secretion system core protein G (142 aa).

A propeptide spans 1–8 (MRRQSQRG) (leader sequence). N-methylphenylalanine is present on F9. Residues 9–29 (FTLLEIMVVIVIMGILASLVV) form a helical membrane-spanning segment. Residues 122–142 (SGQDGVPGTDDDIGNWTLSKK) are disordered.

This sequence belongs to the GSP G family. As to quaternary structure, type II secretion system is composed of four main components: the outer membrane complex, the inner membrane complex, the cytoplasmic secretion ATPase and the periplasm-spanning pseudopilus. Forms homomultimers. Post-translationally, cleaved by the prepilin peptidase. Methylated by prepilin peptidase at the amino group of the N-terminal phenylalanine once the leader sequence is cleaved.

Its subcellular location is the cell inner membrane. Core component of the type II secretion system required for the energy-dependent secretion of extracellular factors such as proteases and toxins from the periplasm. Pseudopilin (pilin-like) protein that polymerizes to form the pseudopilus. Further polymerization triggers pseudopilus growth. The protein is Type II secretion system core protein G of Klebsiella michiganensis (strain ATCC 8724 / DSM 4798 / JCM 20051 / NBRC 3318 / NRRL B-199 / KCTC 1686 / BUCSAV 143 / CCM 1901).